A 558-amino-acid polypeptide reads, in one-letter code: MVSKLTSLQQELLSALLSSGVTKEVLIQALEELLPSPNFGVKLETLPLSPGSGADLDTKPVFHTLTNGHAKGRLSGDEGSEDGDDYDTPPILKELQALNTEEAAEQRAEVDRMLSEDPWRAAKMIKGYMQQHNIPQREVVDVTGLNQSHLSQHLNKGTPMKTQKRAALYTWYVRKQREILRQFNQTVQSSGNMTDKSSQDQLLFLFPEFSQQNQGPGQSEDTCSEPTNKKMRRNRFKWGPASQQILYQAYDRQKNPSKEEREALVEECNRAECLQRGVSPSKAHGLGSNLVTEVRVYNWFANRRKEEAFRQKLAMDAYSSNQTHNLNPLLTHGSPHHQPSSSPPNKMSGVRYNQPGNNEVTSSSTISHHGNSAMVTSQSVLQQVSPASLDPGHSLLSPDSKMQITVSGGGLPPVSTLTNIHSLSHHNPQQSQNLIMTPLSGVMAIAQSLNTSQAQGVPVINSVASSLAALQPVQFSQQLHSPHQQPLMQQSPGSHMAQQPFMAAVTQLQNSHMYAHKQEPPQYSHTSRFPSAMVVTDTSSINTLTSMSSSKQCPLQAW.

Positions 1-31 (MVSKLTSLQQELLSALLSSGVTKEVLIQALE) are dimerization. Residues 1–32 (MVSKLTSLQQELLSALLSSGVTKEVLIQALEE) enclose the HNF-p1 domain. Residues Ser-49, Ser-52, Ser-75, and Ser-80 each carry the phosphoserine modification. Residues 66-85 (TNGHAKGRLSGDEGSEDGDD) are disordered. In terms of domain architecture, POU-specific atypical spans 93-188 (KELQALNTEE…ILRQFNQTVQ (96 aa)). The segment at residues 231-311 (MRRNRFKWGP…NRRKEEAFRQ (81 aa)) is a DNA-binding region (homeobox; HNF1-type). Residues 323-348 (THNLNPLLTHGSPHHQPSSSPPNKMS) are disordered.

The protein belongs to the HNF1 homeobox family. In terms of assembly, binds DNA as a dimer. Can form homodimer or heterodimer with HNF1-alpha. Interacts (via HNF-p1 domain) with PCBD1; the interaction increases its transactivation activity.

It localises to the nucleus. In terms of biological role, transcription factor that binds to the inverted palindrome 5'-GTTAATNATTAAC-3'. Binds to the FPC element in the cAMP regulatory unit of the PLAU gene. Transcriptional activity is increased by coactivator PCBD1. The protein is Hepatocyte nuclear factor 1-beta (Hnf1b) of Mus musculus (Mouse).